A 349-amino-acid chain; its full sequence is tRNA pseudouridine synthase D (349 aa).

Residue F27 coordinates substrate. D80 acts as the Nucleophile in catalysis. N129 contributes to the substrate binding site. The region spanning 155 to 303 is the TRUD domain; sequence GVPNYFGAQR…VEAARRAMLL (149 aa). F329 contributes to the substrate binding site.

It belongs to the pseudouridine synthase TruD family.

The catalysed reaction is uridine(13) in tRNA = pseudouridine(13) in tRNA. In terms of biological role, responsible for synthesis of pseudouridine from uracil-13 in transfer RNAs. This Shigella flexneri protein is tRNA pseudouridine synthase D.